The primary structure comprises 525 residues: ATP synthase subunit alpha (525 aa).

169 to 176 (GDRQTGKT) serves as a coordination point for ATP.

Belongs to the ATPase alpha/beta chains family. As to quaternary structure, F-type ATPases have 2 components, CF(1) - the catalytic core - and CF(0) - the membrane proton channel. CF(1) has five subunits: alpha(3), beta(3), gamma(1), delta(1), epsilon(1). CF(0) has three main subunits: a(1), b(2) and c(9-12). The alpha and beta chains form an alternating ring which encloses part of the gamma chain. CF(1) is attached to CF(0) by a central stalk formed by the gamma and epsilon chains, while a peripheral stalk is formed by the delta and b chains.

It is found in the cell membrane. It catalyses the reaction ATP + H2O + 4 H(+)(in) = ADP + phosphate + 5 H(+)(out). In terms of biological role, produces ATP from ADP in the presence of a proton gradient across the membrane. The alpha chain is a regulatory subunit. This chain is ATP synthase subunit alpha, found in Mesoplasma florum (strain ATCC 33453 / NBRC 100688 / NCTC 11704 / L1) (Acholeplasma florum).